The sequence spans 152 residues: Putative RRN3-like protein RRN3P1 (152 aa).

It belongs to the RRN3 family.

This Homo sapiens (Human) protein is Putative RRN3-like protein RRN3P1 (RRN3P1).